A 166-amino-acid chain; its full sequence is Transcriptional repressor NrdR (166 aa).

A zinc finger spans residues 3–34; that stretch reads CPHCHHNGSRVVDSRPTDDGRVIRRRRECESC. The ATP-cone domain maps to 49-139; the sequence is LLVIKKNGTR…VYRQFKDTGV (91 aa).

The protein belongs to the NrdR family. Requires Zn(2+) as cofactor.

In terms of biological role, negatively regulates transcription of bacterial ribonucleotide reductase nrd genes and operons by binding to NrdR-boxes. The sequence is that of Transcriptional repressor NrdR from Levilactobacillus brevis (strain ATCC 367 / BCRC 12310 / CIP 105137 / JCM 1170 / LMG 11437 / NCIMB 947 / NCTC 947) (Lactobacillus brevis).